Consider the following 336-residue polypeptide: 7,8-didemethyl-8-hydroxy-5-deazariboflavin synthase (336 aa).

The 232-residue stretch at 18 to 249 (ITYSPAYTLV…TSIAIQVPPN (232 aa)) folds into the Radical SAM core domain. Residues cysteine 32, cysteine 36, and cysteine 39 each contribute to the [4Fe-4S] cluster site.

It belongs to the radical SAM superfamily. CofG family. In terms of assembly, consists of two subunits, CofG and CofH. Requires [4Fe-4S] cluster as cofactor.

The catalysed reaction is 5-amino-5-(4-hydroxybenzyl)-6-(D-ribitylimino)-5,6-dihydrouracil + S-adenosyl-L-methionine = 7,8-didemethyl-8-hydroxy-5-deazariboflavin + 5'-deoxyadenosine + L-methionine + NH4(+) + H(+). It functions in the pathway cofactor biosynthesis; coenzyme F0 biosynthesis. Its function is as follows. Catalyzes the radical-mediated synthesis of 7,8-didemethyl-8-hydroxy-5-deazariboflavin from 5-amino-5-(4-hydroxybenzyl)-6-(D-ribitylimino)-5,6-dihydrouracil. This chain is 7,8-didemethyl-8-hydroxy-5-deazariboflavin synthase, found in Synechococcus elongatus (strain ATCC 33912 / PCC 7942 / FACHB-805) (Anacystis nidulans R2).